We begin with the raw amino-acid sequence, 824 residues long: Leucine--tRNA ligase (824 aa).

The short motif at 40-50 is the 'HIGH' region element; it reads PYPSGKIHMGH. The short motif at 580–584 is the 'KMSKS' region element; it reads KMSKS. Lys-583 contacts ATP.

Belongs to the class-I aminoacyl-tRNA synthetase family.

Its subcellular location is the cytoplasm. The catalysed reaction is tRNA(Leu) + L-leucine + ATP = L-leucyl-tRNA(Leu) + AMP + diphosphate. In Alkaliphilus metalliredigens (strain QYMF), this protein is Leucine--tRNA ligase.